The sequence spans 383 residues: Activator of 90 kDa heat shock protein ATPase homolog (383 aa).

2 disordered regions span residues K97–E126 and E209–N228.

This sequence belongs to the AHA1 family. As to quaternary structure, interacts with hspD/HSP90.

It is found in the cytoplasm. Co-chaperone that stimulates hspD/HSP90 ATPase activity. The protein is Activator of 90 kDa heat shock protein ATPase homolog (ahsa) of Dictyostelium discoideum (Social amoeba).